Here is a 225-residue protein sequence, read N- to C-terminus: NAD(P)H-quinone oxidoreductase subunit K, chloroplastic (225 aa).

[4Fe-4S] cluster-binding residues include cysteine 43, cysteine 44, cysteine 108, and cysteine 139.

The protein belongs to the complex I 20 kDa subunit family. As to quaternary structure, NDH is composed of at least 16 different subunits, 5 of which are encoded in the nucleus. [4Fe-4S] cluster is required as a cofactor.

The protein localises to the plastid. It is found in the chloroplast thylakoid membrane. The enzyme catalyses a plastoquinone + NADH + (n+1) H(+)(in) = a plastoquinol + NAD(+) + n H(+)(out). It carries out the reaction a plastoquinone + NADPH + (n+1) H(+)(in) = a plastoquinol + NADP(+) + n H(+)(out). Its function is as follows. NDH shuttles electrons from NAD(P)H:plastoquinone, via FMN and iron-sulfur (Fe-S) centers, to quinones in the photosynthetic chain and possibly in a chloroplast respiratory chain. The immediate electron acceptor for the enzyme in this species is believed to be plastoquinone. Couples the redox reaction to proton translocation, and thus conserves the redox energy in a proton gradient. The sequence is that of NAD(P)H-quinone oxidoreductase subunit K, chloroplastic from Vitis vinifera (Grape).